The sequence spans 414 residues: 3-phosphoshikimate 1-carboxyvinyltransferase (414 aa).

Positions 20, 21, and 25 each coordinate 3-phosphoshikimate. Phosphoenolpyruvate is bound at residue K20. Positions 85 and 113 each coordinate phosphoenolpyruvate. 3-phosphoshikimate contacts are provided by S154, S155, Q156, S181, D296, and K323. Q156 serves as a coordination point for phosphoenolpyruvate. D296 serves as the catalytic Proton acceptor. The phosphoenolpyruvate site is built by R327, R371, and K395.

It belongs to the EPSP synthase family. Monomer.

The protein localises to the cytoplasm. It carries out the reaction 3-phosphoshikimate + phosphoenolpyruvate = 5-O-(1-carboxyvinyl)-3-phosphoshikimate + phosphate. It functions in the pathway metabolic intermediate biosynthesis; chorismate biosynthesis. Functionally, catalyzes the transfer of the enolpyruvyl moiety of phosphoenolpyruvate (PEP) to the 5-hydroxyl of shikimate-3-phosphate (S3P) to produce enolpyruvyl shikimate-3-phosphate and inorganic phosphate. This is 3-phosphoshikimate 1-carboxyvinyltransferase from Saccharolobus islandicus (strain Y.G.57.14 / Yellowstone #1) (Sulfolobus islandicus).